We begin with the raw amino-acid sequence, 272 residues long: Replication-associated protein A (272 aa).

A CRESS-DNA virus Rep endonuclease domain is found at 11–114 (SHRSPNTFLT…PLALFERGTF (104 aa)). Positions 18–21 (FLTY) match the RCR-1 motif. A divalent metal cation-binding residues include Glu-52 and His-62. An RCR-2 motif is present at residues 60 to 65 (CLHALI). The active-site For DNA cleavage activity is Tyr-100. The short motif at 100–103 (YITK) is the RCR-3 element. Glu-104 is an a divalent metal cation binding site. The interval 175–187 (SANKLFPDIQEEF) is oligomerization. An LXCXE motif, interaction with host RBR1 motif is present at residues 198 to 202 (LLCNE). Positions 221–230 (LLLQPNCYSI) are transactivation. Positions 251–265 (QGSAASTSSVQQGQE) are enriched in polar residues. Positions 251–272 (QGSAASTSSVQQGQENLHGPEA) are disordered.

Belongs to the geminiviridae Rep protein family. Homooligomer. Interacts (via LXCXE domain) with host retinoblastoma-related protein 1 (RBR1), and may thereby deregulate the host cell cycle. Part of the C- and V-complexes which are RepA-Rep-DNA complexes involved in the c-sense and v-sense transcription.

The protein localises to the host nucleus. Its subcellular location is the host cytoplasm. Implicated in enhancement of V-sense gene expression. Acts a an inhibitor of C-sense gene transcription. This is Replication-associated protein A from Avena sativa (Oat).